Here is an 823-residue protein sequence, read N- to C-terminus: Degenerin-like protein asic-1 (823 aa).

Residues 1 to 38 (MGKNSLKRALELDVVDFAEHTSAHGIPRAYVSTGWRRY) are Cytoplasmic-facing. The chain crosses the membrane as a helical span at residues 39 to 59 (MWLLCFLFCLSCFGHQAYLIV). Residues 60–767 (ERFNRNDIIV…FGGQLGLWMG (708 aa)) lie on the Extracellular side of the membrane. 2 disulfide bridges follow: cysteine 86–cysteine 518 and cysteine 494–cysteine 501. N-linked (GlcNAc...) asparagine glycans are attached at residues asparagine 228, asparagine 326, asparagine 347, asparagine 415, and asparagine 486. 2 N-linked (GlcNAc...) asparagine glycosylation sites follow: asparagine 527 and asparagine 546. 4 disulfide bridges follow: cysteine 604/cysteine 687, cysteine 625/cysteine 683, cysteine 629/cysteine 681, and cysteine 638/cysteine 664. Residues 767-769 (GVS) carry the GAS motif; ion selectivity filter motif. A helical membrane pass occupies residues 768–788 (VSVITIGEVACFFFEVFISLI). Topologically, residues 789–795 (SSNRTKR) are cytoplasmic.

It belongs to the amiloride-sensitive sodium channel (TC 1.A.6) family. Homotrimer. Heterotrimer; with other ASIC proteins producing channel with different properties.

Its subcellular location is the cell membrane. The protein resides in the postsynaptic cell membrane. It is found in the cell projection. It localises to the dendrite. It catalyses the reaction Na(+)(in) = Na(+)(out). The enzyme catalyses K(+)(in) = K(+)(out). It carries out the reaction Li(+)(in) = Li(+)(out). The catalysed reaction is Ca(2+)(in) = Ca(2+)(out). Forms voltage-independent, pH-gated trimeric sodium channels that act as postsynaptic excitatory receptors in the nervous system, playing a crucial role in regulating synaptic plasticity, learning, and memory. Promotes synaptic vesicle fusion to positively regulate the release of dopamine at dopaminergic neuron synapses. Displays high selectivity for sodium ions but can also permit the permeation of other cations. In Caenorhabditis elegans, this protein is Degenerin-like protein asic-1.